Reading from the N-terminus, the 146-residue chain is Transcriptional regulator MraZ (146 aa).

2 consecutive SpoVT-AbrB domains span residues 9–55 (ASAL…PRPA) and 81–124 (AMDV…DVQR).

The protein belongs to the MraZ family. In terms of assembly, forms oligomers.

It is found in the cytoplasm. It localises to the nucleoid. The sequence is that of Transcriptional regulator MraZ from Methylibium petroleiphilum (strain ATCC BAA-1232 / LMG 22953 / PM1).